A 1040-amino-acid polypeptide reads, in one-letter code: Multidrug resistance protein MdtB (1040 aa).

Transmembrane regions (helical) follow at residues 25 to 45 (LLMA…PVAA), 347 to 367 (LMLA…NIPA), 369 to 389 (IIPG…MVFL), 396 to 416 (LTLM…IVVI), 440 to 460 (IGFT…PLLF), 472 to 492 (FAVT…TLTP), 537 to 557 (WLTL…WIVI), 863 to 883 (LGST…VLGV), 888 to 908 (FIHP…ALLA), 910 to 930 (IIAG…LIGI), 968 to 988 (ILMT…STGV), and 998 to 1018 (IAMV…TPVI).

Belongs to the resistance-nodulation-cell division (RND) (TC 2.A.6) family. MdtB subfamily. As to quaternary structure, part of a tripartite efflux system composed of MdtA, MdtB and MdtC. MdtB forms a heteromultimer with MdtC.

Its subcellular location is the cell inner membrane. The polypeptide is Multidrug resistance protein MdtB (Salmonella agona (strain SL483)).